We begin with the raw amino-acid sequence, 679 residues long: Enzymatic polyprotein (679 aa).

The tract at residues 40–130 (LHCFVDTGAS…LYEPFIQFTD (91 aa)) is protease. Residue aspartate 45 is part of the active site. In terms of domain architecture, Reverse transcriptase spans 272–452 (LKVIKPSKSP…KKINFLGLEI (181 aa)).

It belongs to the caulimoviridae enzymatic polyprotein family.

The enzyme catalyses DNA(n) + a 2'-deoxyribonucleoside 5'-triphosphate = DNA(n+1) + diphosphate. In terms of biological role, encodes for at least two polypeptides: protease (PR) and reverse transcriptase (RT). The protease processes the polyprotein in cis. Reverse transcriptase is multifunctional enzyme that converts the viral RNA genome into dsDNA in viral cytoplasmic capsids. This enzyme displays a DNA polymerase activity that can copy either DNA or RNA templates, and a ribonuclease H (RNase H) activity that cleaves the RNA strand of RNA-DNA heteroduplexes in a partially processive 3'- to 5'-endonucleasic mode. Neo-synthesized pregenomic RNA (pgRNA) are encapsidated, and reverse-transcribed inside the nucleocapsid. Partial (+)DNA is synthesized from the (-)DNA template and generates the relaxed circular DNA (RC-DNA) genome. After budding and infection, the RC-DNA migrates in the nucleus, and is converted into a plasmid-like covalently closed circular DNA (cccDNA). This Cauliflower mosaic virus (strain CM-1841) (CaMV) protein is Enzymatic polyprotein.